Here is a 561-residue protein sequence, read N- to C-terminus: MVTQHSYRMHGAVYTKPIIVDLILDLTGYTSDKNLENFKLLDPSFGDGVFLEAAVHRLMDSLIRRGYRPNELIDHLGNCIRGIELRLEAYQAGRHRLQKVLEGYGFSKPEINWLINQWIIQADFLLWQEDTTEAIKFDFVVGNPPYVRQELIQDELIKKYRKRYTTIYDRADLYVPFIQHSLELLSEQGTLGIICSDRFTKNRYGKKLRKFITDNYKVRYIVDLHKTSPFENEVTAYPAIYVIKTKNYDKSVVRAVYTEVITSKVCQDAKDFLLSNQKPDQSSKEMKTYVFSEWFAGDEPWIIQSQECREILRRLENRFPLIEDDVHSCKIRIGVATGADKVYIVDPQQVDIEPEVLLPLVTTADISSGRIIWSGKHVINPFNSDGGLINLDDFPRLKTYFQQHEEIIKNRNVAKKNPSQWFRTIDRIYPEIVHQPKLLIPDMKNTNHIVKDDGAFYPHHNLYYILPGNWNIDILRAILLSSVVKFFIWSYATKMRGDTLRYQAQYLRKIRLPDPKSLTNDQKERLMDERVIQSQEYLDSIVAEIYQLSKTEIEIIKDALE.

Belongs to the N(4)/N(6)-methyltransferase family.

It catalyses the reaction a 2'-deoxyadenosine in DNA + S-adenosyl-L-methionine = an N(6)-methyl-2'-deoxyadenosine in DNA + S-adenosyl-L-homocysteine + H(+). Its function is as follows. A gamma subtype methylase, recognizes the double-stranded sequence 5'-CTCGAG-3', methylates A-5 on both strands, and protects the DNA from cleavage by the BstVI endonuclease. In Geobacillus stearothermophilus (Bacillus stearothermophilus), this protein is Type II methyltransferase M.BstVI.